Reading from the N-terminus, the 352-residue chain is S-adenosylmethionine:tRNA ribosyltransferase-isomerase (352 aa).

This sequence belongs to the QueA family. In terms of assembly, monomer.

The protein localises to the cytoplasm. The enzyme catalyses 7-aminomethyl-7-carbaguanosine(34) in tRNA + S-adenosyl-L-methionine = epoxyqueuosine(34) in tRNA + adenine + L-methionine + 2 H(+). The protein operates within tRNA modification; tRNA-queuosine biosynthesis. Its function is as follows. Transfers and isomerizes the ribose moiety from AdoMet to the 7-aminomethyl group of 7-deazaguanine (preQ1-tRNA) to give epoxyqueuosine (oQ-tRNA). In Allorhizobium ampelinum (strain ATCC BAA-846 / DSM 112012 / S4) (Agrobacterium vitis (strain S4)), this protein is S-adenosylmethionine:tRNA ribosyltransferase-isomerase.